A 171-amino-acid chain; its full sequence is Nudix hydrolase DR_0079 (171 aa).

The 131-residue stretch at glutamate 32–leucine 162 folds into the Nudix hydrolase domain. Positions glycine 69–asparagine 91 match the Nudix box motif. Glutamate 85 and glutamate 89 together coordinate Mg(2+).

This sequence belongs to the Nudix hydrolase family. In terms of assembly, monomer. It depends on Mg(2+) as a cofactor.

With respect to regulation, inhibited by zinc, calcium or copper ions. Hydrolase that converts various nucleotide triphosphates (NTPs) to the corresponding nucleotide monophosphates and diphosphate, and nucleotide diphosphates to nucleotide monophosphates and inorganic phosphate. Has a marked preference for cytosine ribonucleoside 5'-diphosphate (CDP) and cytosine ribonucleoside 5'-triphosphate (CTP). Has lower activity towards the deoxyribose nucleotides dCDP and dCTP, and towards dGDP, TDP and UDP. The polypeptide is Nudix hydrolase DR_0079 (Deinococcus radiodurans (strain ATCC 13939 / DSM 20539 / JCM 16871 / CCUG 27074 / LMG 4051 / NBRC 15346 / NCIMB 9279 / VKM B-1422 / R1)).